Consider the following 142-residue polypeptide: ATP synthase epsilon chain (142 aa).

Belongs to the ATPase epsilon chain family. F-type ATPases have 2 components, CF(1) - the catalytic core - and CF(0) - the membrane proton channel. CF(1) has five subunits: alpha(3), beta(3), gamma(1), delta(1), epsilon(1). CF(0) has three main subunits: a, b and c.

The protein localises to the cell inner membrane. Produces ATP from ADP in the presence of a proton gradient across the membrane. The sequence is that of ATP synthase epsilon chain from Shewanella frigidimarina (strain NCIMB 400).